Reading from the N-terminus, the 134-residue chain is Large ribosomal subunit protein uL16c (134 aa).

The tract at residues 1 to 21 is disordered; sequence MLSPKRTKYRKHHRGRMRGKA.

The protein belongs to the universal ribosomal protein uL16 family. In terms of assembly, part of the 50S ribosomal subunit.

Its subcellular location is the plastid. It localises to the chloroplast. This is Large ribosomal subunit protein uL16c from Chlorella vulgaris (Green alga).